The following is a 289-amino-acid chain: ATP synthase gamma chain (289 aa).

This sequence belongs to the ATPase gamma chain family. As to quaternary structure, F-type ATPases have 2 components, CF(1) - the catalytic core - and CF(0) - the membrane proton channel. CF(1) has five subunits: alpha(3), beta(3), gamma(1), delta(1), epsilon(1). CF(0) has three main subunits: a, b and c.

It is found in the cell inner membrane. In terms of biological role, produces ATP from ADP in the presence of a proton gradient across the membrane. The gamma chain is believed to be important in regulating ATPase activity and the flow of protons through the CF(0) complex. This chain is ATP synthase gamma chain, found in Cereibacter sphaeroides (strain ATCC 17025 / ATH 2.4.3) (Rhodobacter sphaeroides).